Here is a 343-residue protein sequence, read N- to C-terminus: Flavone 3'-O-methyltransferase OMT2 (343 aa).

Asparagine 107 serves as a coordination point for (E)-ferulate. S-adenosyl-L-homocysteine-binding residues include glycine 184, aspartate 207, aspartate 227, methionine 228, methionine 240, and lysine 241. The active-site Proton acceptor is the histidine 245. A (E)-5-hydroxyferulate-binding site is contributed by aspartate 246. Active-site residues include glutamate 273 and glutamate 305.

The protein belongs to the class I-like SAM-binding methyltransferase superfamily. Cation-independent O-methyltransferase family. COMT subfamily. Homodimer.

It carries out the reaction (E)-5-hydroxyferulate + S-adenosyl-L-methionine = (E)-sinapate + S-adenosyl-L-homocysteine + H(+). It catalyses the reaction luteolin + S-adenosyl-L-methionine = chrysoeriol + S-adenosyl-L-homocysteine + H(+). The enzyme catalyses quercetin + S-adenosyl-L-methionine = isorhamnetin + S-adenosyl-L-homocysteine + H(+). The catalysed reaction is (E)-caffeate + S-adenosyl-L-methionine = (E)-ferulate + S-adenosyl-L-homocysteine + H(+). It carries out the reaction a 3'-hydroxyflavone + S-adenosyl-L-methionine = a 3'-methoxyflavone + S-adenosyl-L-homocysteine + H(+). The protein operates within flavonoid metabolism. Functionally, catalyzes the 3'-O-methylation of the flavonoids luteolin and quercetin. Catalyzes the 3- of 5-O-methylation of the phenylpropanoids caffeate and 5-hydroxyferulate. Substrate preference is 5-hydroxyferulate &gt; luteolin &gt; quercetin &gt; caffeate. Apigenin, kempferol and 3,4-dimethylquercetin do not seem to be substrates for methylation. This chain is Flavone 3'-O-methyltransferase OMT2, found in Chrysosplenium americanum (American golden saxifrage).